The following is a 254-amino-acid chain: Alcohol dehydrogenase (254 aa).

10-33 (FVAGLGGIGLDTNREIVKSGPKNL) is an NAD(+) binding site. Substrate is bound at residue serine 138. The active-site Proton acceptor is tyrosine 151.

It belongs to the short-chain dehydrogenases/reductases (SDR) family. In terms of assembly, homodimer.

The enzyme catalyses a primary alcohol + NAD(+) = an aldehyde + NADH + H(+). It catalyses the reaction a secondary alcohol + NAD(+) = a ketone + NADH + H(+). This Scaptomyza albovittata (Fruit fly) protein is Alcohol dehydrogenase (Adh).